Reading from the N-terminus, the 58-residue chain is Ranakinin-N (58 aa).

Residues 1–22 form the signal peptide; the sequence is MFTMKKSLLLLFFLGTISMSLC. A propeptide spanning residues 23-43 is cleaved from the precursor; the sequence is EEKRDADEEETEGEAKMEDIK. Residues 25-58 form a disordered region; sequence KRDADEEETEGEAKMEDIKRAEAVPPGFTPFRKP. Residues 35–46 show a composition bias toward basic and acidic residues; the sequence is GEAKMEDIKRAE.

As to expression, expressed by the skin glands.

It is found in the secreted. Its function is as follows. Induces contraction of intestinal smooth muscle in isolated guinea pig ileum. May induce relaxation of arterial smooth muscle. May target bradykinin receptors (BDKRB). Lacks antibacterial activity against the Gram-positive bacterium S.aureus and the Gram-negative bacteria E.coli and B.dysenteria, and antifungal activity against C.albicans. The protein is Ranakinin-N of Hylarana nigrovittata (Black-striped frog).